Consider the following 113-residue polypeptide: Hemerythrin (113 aa).

Fe cation-binding residues include His-25, His-54, Glu-58, His-73, His-77, His-101, and Asp-106.

This sequence belongs to the hemerythrin family. In terms of assembly, homotrimer.

In terms of biological role, hemerythrin is a respiratory protein in blood cells of certain marine worms. The oxygen-binding site in each chain contains two iron atoms. This chain is Hemerythrin, found in Siphonosoma cumanense (Sipunculan worm).